Consider the following 272-residue polypeptide: HMP-PP phosphatase (272 aa).

Asp-8 serves as the catalytic Nucleophile. 3 residues coordinate Mg(2+): Asp-8, Asp-10, and Asp-212.

The protein belongs to the HAD-like hydrolase superfamily. Cof family. Mg(2+) serves as cofactor.

It carries out the reaction 4-amino-2-methyl-5-(diphosphooxymethyl)pyrimidine + H2O = 4-amino-2-methyl-5-(phosphooxymethyl)pyrimidine + phosphate + H(+). Catalyzes the hydrolysis of 4-amino-2-methyl-5-hydroxymethylpyrimidine pyrophosphate (HMP-PP) to 4-amino-2-methyl-5-hydroxymethylpyrimidine phosphate (HMP-P). The polypeptide is HMP-PP phosphatase (Salmonella schwarzengrund (strain CVM19633)).